We begin with the raw amino-acid sequence, 393 residues long: Argininosuccinate synthase (393 aa).

Residues 7–15 and Ala34 contribute to the ATP site; that span reads AYSGGLDTS. Positions 85 and 90 each coordinate L-citrulline. Gly115 serves as a coordination point for ATP. Thr117, Asn121, and Asp122 together coordinate L-aspartate. Residue Asn121 coordinates L-citrulline. L-citrulline-binding residues include Arg125, Ser176, Ser185, Glu261, and Tyr273.

The protein belongs to the argininosuccinate synthase family. Type 1 subfamily. Homotetramer.

It is found in the cytoplasm. It carries out the reaction L-citrulline + L-aspartate + ATP = 2-(N(omega)-L-arginino)succinate + AMP + diphosphate + H(+). Its pathway is amino-acid biosynthesis; L-arginine biosynthesis; L-arginine from L-ornithine and carbamoyl phosphate: step 2/3. The protein is Argininosuccinate synthase of Ehrlichia chaffeensis (strain ATCC CRL-10679 / Arkansas).